Reading from the N-terminus, the 234-residue chain is Leucyl/phenylalanyl-tRNA--protein transferase (234 aa).

It belongs to the L/F-transferase family.

It is found in the cytoplasm. The enzyme catalyses N-terminal L-lysyl-[protein] + L-leucyl-tRNA(Leu) = N-terminal L-leucyl-L-lysyl-[protein] + tRNA(Leu) + H(+). It catalyses the reaction N-terminal L-arginyl-[protein] + L-leucyl-tRNA(Leu) = N-terminal L-leucyl-L-arginyl-[protein] + tRNA(Leu) + H(+). The catalysed reaction is L-phenylalanyl-tRNA(Phe) + an N-terminal L-alpha-aminoacyl-[protein] = an N-terminal L-phenylalanyl-L-alpha-aminoacyl-[protein] + tRNA(Phe). In terms of biological role, functions in the N-end rule pathway of protein degradation where it conjugates Leu, Phe and, less efficiently, Met from aminoacyl-tRNAs to the N-termini of proteins containing an N-terminal arginine or lysine. The chain is Leucyl/phenylalanyl-tRNA--protein transferase from Citrobacter koseri (strain ATCC BAA-895 / CDC 4225-83 / SGSC4696).